Here is a 375-residue protein sequence, read N- to C-terminus: MGASAATGMQMVAARPCISASQGMLTSRAAVSRIGRALSTTTGFATCPRICYSSPLGSSKRSGVAIRAMSSESGPQGLPIDLRGKRAFIAGVADDNGYGWAIAKALAAAGAEILVGTWVPALNIFETSLRRGKFDESRKLPDGSLMEIVKVYPLDAVYDSPEDVPEDVKGNKRYAGSSNWTVKEVAESVKNDFGSIDILVHSLANGPEVTKPLLETSRRGYLAALSASSYSFVSLLQHFLPIMNPGGASISLTYIASERAIPGYGGGMSSAKAALESDTKVLAFEAGRKGKIRVNTISAGPLGSRAAKAIGFIEKMIEYSYVNAPLQKELLADEVGNTAAFLVSPLASAITGSTVYVDNGLNTMGLAVDSPTISS.

The N-terminal 67 residues, 1 to 67 (MGASAATGMQ…SSKRSGVAIR (67 aa)), are a transit peptide targeting the chloroplast. Residues G91, Y98, 155-156 (DA), 202-203 (SL), and L252 each bind NAD(+). Active-site proton acceptor residues include Y254 and Y264. NAD(+)-binding positions include K272 and 302-306 (LGSRA).

The protein belongs to the short-chain dehydrogenases/reductases (SDR) family. FabI subfamily. In terms of assembly, homotetramer.

It localises to the plastid. The protein localises to the chloroplast. The catalysed reaction is a 2,3-saturated acyl-[ACP] + NAD(+) = a (2E)-enoyl-[ACP] + NADH + H(+). Its pathway is lipid metabolism; fatty acid biosynthesis. Its function is as follows. Catalyzes the NAD-dependent reduction of a carbon-carbon double bond in an enoyl moiety that is covalently linked to an acyl carrier protein (ACP). Catalyzes the last reduction step in the de novo synthesis cycle of fatty acids. Involved in the elongation cycle of fatty acids which are used in lipid metabolism. Required for normal plant growth. The polypeptide is Enoyl-[acyl-carrier-protein] reductase [NADH] 1, chloroplastic (Oryza sativa subsp. japonica (Rice)).